We begin with the raw amino-acid sequence, 206 residues long: uncharacterized protein (206 aa).

Positions 128 to 206 (KRYNVQKPKV…DQSWLDELLR (79 aa)) are disordered. A compositionally biased stretch (polar residues) spans 171–181 (YISSNHSSMHI).

Its subcellular location is the cytoplasm. It localises to the nucleus. This is an uncharacterized protein from Schizosaccharomyces pombe (strain 972 / ATCC 24843) (Fission yeast).